Here is a 357-residue protein sequence, read N- to C-terminus: Decorin (357 aa).

Positions 1–16 are cleaved as a signal peptide; that stretch reads MRLVLLFVLLLPVCLA. Residues 17–30 constitute a propeptide that is removed on maturation; it reads TRFHQKGLFDFMIE. A glycan (O-linked (Xyl...) (glycosaminoglycan) serine) is linked at Ser46. 2 disulfides stabilise this stretch: Cys52–Cys58 and Cys56–Cys65. LRR repeat units lie at residues 71–91, 92–115, 116–139, 140–160, 161–184, 185–210, 211–231, 232–255, 256–279, 280–302, 303–332, and 333–357; these read ERVP…NNKI, TEIK…NNKI, SKIS…KNNL, KELP…ENEI, SKLR…TNPL, KSSG…DTNI, TSIP…GNKI, SKID…FNSI, SSVE…NNEL, VRVP…NNKI, ASIG…SNPV, and QYWE…GNYK. Asn209 carries an N-linked (GlcNAc...) asparagine glycan. N-linked (GlcNAc...) asparagine glycosylation occurs at Asn260. Cysteines 311 and 344 form a disulfide.

Belongs to the small leucine-rich proteoglycan (SLRP) family. SLRP class I subfamily. Binds to type I and type II collagen, to fibronectin and TGF-beta. Forms a ternary complex with MFAP2 and ELN. In terms of processing, the attached glycosaminoglycan chain can be either chondroitin sulfate or dermatan sulfate depending upon the tissue of origin.

The protein resides in the secreted. The protein localises to the extracellular space. Its subcellular location is the extracellular matrix. Functionally, may affect the rate of fibrils formation. The sequence is that of Decorin (DCN) from Gallus gallus (Chicken).